Here is a 403-residue protein sequence, read N- to C-terminus: Tyrosine--tRNA ligase (403 aa).

The 'HIGH' region signature appears at 42 to 51; it reads PTAPDLHLGH. The 'KMSKS' region signature appears at 226 to 230; that stretch reads KMSKS. K229 contacts ATP. One can recognise an S4 RNA-binding domain in the interval 339 to 400; it reads LRIASLLTAA…GKRNFARVSL (62 aa).

The protein belongs to the class-I aminoacyl-tRNA synthetase family. TyrS type 2 subfamily. Homodimer.

Its subcellular location is the cytoplasm. The catalysed reaction is tRNA(Tyr) + L-tyrosine + ATP = L-tyrosyl-tRNA(Tyr) + AMP + diphosphate + H(+). Catalyzes the attachment of tyrosine to tRNA(Tyr) in a two-step reaction: tyrosine is first activated by ATP to form Tyr-AMP and then transferred to the acceptor end of tRNA(Tyr). The polypeptide is Tyrosine--tRNA ligase (Xanthomonas oryzae pv. oryzae (strain MAFF 311018)).